The chain runs to 245 residues: Probable transcriptional regulatory protein TP_0474 (245 aa).

It belongs to the TACO1 family.

The protein localises to the cytoplasm. This is Probable transcriptional regulatory protein TP_0474 from Treponema pallidum (strain Nichols).